A 219-amino-acid chain; its full sequence is Probable nicotinate-nucleotide adenylyltransferase (219 aa).

This sequence belongs to the NadD family.

It carries out the reaction nicotinate beta-D-ribonucleotide + ATP + H(+) = deamido-NAD(+) + diphosphate. Its pathway is cofactor biosynthesis; NAD(+) biosynthesis; deamido-NAD(+) from nicotinate D-ribonucleotide: step 1/1. In terms of biological role, catalyzes the reversible adenylation of nicotinate mononucleotide (NaMN) to nicotinic acid adenine dinucleotide (NaAD). This chain is Probable nicotinate-nucleotide adenylyltransferase, found in Erythrobacter litoralis (strain HTCC2594).